The primary structure comprises 397 residues: MSKIIAINAGSSSLKFQLFEMPSETVLTKGLVERIGLEDSIFTITVDGEKQKEITNIPDHAVAVNMLLKKLTENGIVKSLDEIGGIGHRVVHGGEKFADSVLITDEVLADIEELSDLAPLHNPANVVGIKAFQEVLPNVPAVAVFDTAFHQTMPESAFLYSLPYEYYEKFGIRKYGFHGTSHKYVTERAAELLGRPLESLSLLSCHLGNGASIAAVEGGKSIDTSMGFTPLAGVTMGTRSGNIDPALIPYIMEKTGQTVEEVVNVLNKKSGMLGLTGYSSDLRDIIAKEEEGDHRAKVALDVFVSRIHKYIGSYTARMKGVDAIIFTAGVGENSAIIRERVLEGLEYMGVYFDAKRNNVFGEEAFINFPHSPVKIIVIPTDEEVMIARDVLRLGNIG.

Mg(2+) is bound at residue Asn-8. ATP is bound at residue Lys-15. Arg-89 is a substrate binding site. Catalysis depends on Asp-146, which acts as the Proton donor/acceptor. Residues 206–210 (HLGNG), 281–283 (DLR), and 329–333 (GVGEN) each bind ATP. Mg(2+) is bound at residue Glu-382.

This sequence belongs to the acetokinase family. In terms of assembly, homodimer. Requires Mg(2+) as cofactor. The cofactor is Mn(2+).

Its subcellular location is the cytoplasm. The catalysed reaction is acetate + ATP = acetyl phosphate + ADP. It functions in the pathway metabolic intermediate biosynthesis; acetyl-CoA biosynthesis; acetyl-CoA from acetate: step 1/2. In terms of biological role, catalyzes the formation of acetyl phosphate from acetate and ATP. Can also catalyze the reverse reaction. The protein is Acetate kinase of Bacillus cereus (strain ATCC 10987 / NRS 248).